Consider the following 391-residue polypeptide: MYQTLTITSAQGPLSYDPSPGTFMHSAASSPVYVPTSRVGSMLTSISYLQGTGASQGAHSVNSHWSQATSESSSFNNSSPHTSSRYHYPPSPPMHNGSTRDTGYSSSLTVSSRDQYTPLARSLNGSYGSHYTPYMAPQLTSAWPAGPFDNTMLHSLQSRGAPISVRGAPGDVLDELPESRECVNCGSVQTPLWRRDGTGHFLCNACGLYSKMNGLSRPLIKPQKRVPSSRRIGLACANCHTSTTTLWRRNTEGEPVCNACGLYMKLHGVPRPLAMKKEGIQTRKRKPKTLNKSKSSSSNGNSSHQISMTPTSTTSSTNSDDCIKNGSPSQNTTPVVASSLMSTQQTESTSPNSNTLKYTGQDGLYSAVSLSSASEVAASVRQDSWCALALA.

The disordered stretch occupies residues 57-111 (GAHSVNSHWSQATSESSSFNNSSPHTSSRYHYPPSPPMHNGSTRDTGYSSSLTVS). Over residues 66–83 (SQATSESSSFNNSSPHTS) the composition is skewed to low complexity. Residues 96–111 (NGSTRDTGYSSSLTVS) are compositionally biased toward polar residues. 2 consecutive GATA-type zinc fingers follow at residues 182–206 (CVNCGSVQTPLWRRDGTGHFLCNAC) and 236–260 (CANCHTSTTTLWRRNTEGEPVCNAC). Positions 274-355 (AMKKEGIQTR…TESTSPNSNT (82 aa)) are disordered. The span at 282 to 291 (TRKRKPKTLN) shows a compositional bias: basic residues. The segment covering 292–319 (KSKSSSSNGNSSHQISMTPTSTTSSTNS) has biased composition (low complexity). The span at 326 to 355 (GSPSQNTTPVVASSLMSTQQTESTSPNSNT) shows a compositional bias: polar residues.

As to expression, in embryos, expressed in the presumptive heart mesoderm. In adults, expressed at high levels in heart, small intestine, and stomach and at lower levels in lung, pancreas and colon.

The protein resides in the nucleus. Its function is as follows. Transcriptional activator that binds 5'-GATA-3'-containing motifs within gene promoters. Regulates cardiac-specific transcription during embryogenesis and thereby cardiogenesis. In Xenopus laevis (African clawed frog), this protein is GATA-binding factor 6-A (gata6-a).